The chain runs to 424 residues: Tyrosine--tRNA ligase (424 aa).

Residue Y37 participates in L-tyrosine binding. The 'HIGH' region signature appears at 42–51; sequence PTADSLHLGH. The residue at position 144 (K144) is an N6-acetyllysine. L-tyrosine-binding residues include Y175 and Q179. Residues 235–239 carry the 'KMSKS' region motif; it reads KFGKT. Residue K238 coordinates ATP. An S4 RNA-binding domain is found at 357-414; that stretch reads ADLMQALVDSELQPSRGQARKTIASNAITINGEKQSDPEYFFKEEDRLFGRFTLLRRG.

The protein belongs to the class-I aminoacyl-tRNA synthetase family. TyrS type 1 subfamily. As to quaternary structure, homodimer.

It is found in the cytoplasm. It catalyses the reaction tRNA(Tyr) + L-tyrosine + ATP = L-tyrosyl-tRNA(Tyr) + AMP + diphosphate + H(+). Catalyzes the attachment of tyrosine to tRNA(Tyr) in a two-step reaction: tyrosine is first activated by ATP to form Tyr-AMP and then transferred to the acceptor end of tRNA(Tyr). This chain is Tyrosine--tRNA ligase, found in Shigella flexneri serotype 5b (strain 8401).